A 161-amino-acid polypeptide reads, in one-letter code: Nucleotide-binding protein LHK_01423 (161 aa).

The protein belongs to the YajQ family.

Nucleotide-binding protein. This chain is Nucleotide-binding protein LHK_01423, found in Laribacter hongkongensis (strain HLHK9).